A 627-amino-acid polypeptide reads, in one-letter code: Spindle assembly abnormal protein 6 homolog (627 aa).

The PISA domain maps to 39–91 (VHRKDLVVRLTDDTDLYFLYNLIISEEDFQSLKVQQGLLIDFTSFPQKFIDLL). Positions 153–473 (LASCLSSVKE…SREVLKTNEN (321 aa)) form a coiled coil. Disordered regions lie at residues 187-257 (QTLS…LQTK) and 561-586 (EVSP…SKYF). Residues 191–201 (EKSRELDKLRS) are compositionally biased toward basic and acidic residues. The span at 202-213 (EWTSQTTSLSSR) shows a compositional bias: polar residues. The segment covering 214 to 226 (HMQDLTAEREKAL) has biased composition (basic and acidic residues). Low complexity predominate over residues 229–238 (QSRLQQQNEQ).

Nine homodimers form a cartwheel structure with an internal diameter of 23 nM and radial spokes connecting to the microtubule triplets.

It is found in the cytoplasm. The protein localises to the cytoskeleton. The protein resides in the microtubule organizing center. Its subcellular location is the centrosome. In terms of biological role, central scaffolding component of the centrioles ensuring their 9-fold symmetry. Required for centrosome biogenesis and duplication: required both for mother-centriole-dependent centriole duplication and deuterosome-dependent centriole amplification in multiciliated cells. The sequence is that of Spindle assembly abnormal protein 6 homolog (sass6) from Danio rerio (Zebrafish).